The chain runs to 117 residues: Large ribosomal subunit protein bL20c (117 aa).

This sequence belongs to the bacterial ribosomal protein bL20 family.

The protein resides in the plastid. It localises to the chloroplast. Its function is as follows. Binds directly to 23S ribosomal RNA and is necessary for the in vitro assembly process of the 50S ribosomal subunit. It is not involved in the protein synthesizing functions of that subunit. This Lobularia maritima (Sweet alyssum) protein is Large ribosomal subunit protein bL20c.